The following is a 50-amino-acid chain: uncharacterized protein (50 aa).

Residues 5 to 19 (IIIIVIVIIIFFFYL) traverse the membrane as a helical segment. Residues 19-50 (LKQKKLTNCETQVVKVQKDIDEINLKLKKLNK) are a coiled coil.

It localises to the membrane. This is an uncharacterized protein from Acheta domesticus (House cricket).